The primary structure comprises 118 residues: Small ribosomal subunit protein uS13 (118 aa).

The interval 93–118 (RGLPVRGQRTKTNARTRKGPRKPIRK) is disordered.

The protein belongs to the universal ribosomal protein uS13 family. As to quaternary structure, part of the 30S ribosomal subunit. Forms a loose heterodimer with protein S19. Forms two bridges to the 50S subunit in the 70S ribosome.

Functionally, located at the top of the head of the 30S subunit, it contacts several helices of the 16S rRNA. In the 70S ribosome it contacts the 23S rRNA (bridge B1a) and protein L5 of the 50S subunit (bridge B1b), connecting the 2 subunits; these bridges are implicated in subunit movement. Contacts the tRNAs in the A and P-sites. This is Small ribosomal subunit protein uS13 from Pseudomonas syringae pv. tomato (strain ATCC BAA-871 / DC3000).